The primary structure comprises 551 residues: L-lactate permease (551 aa).

13 helical membrane passes run 13 to 33 (NIWL…FALI), 37 to 57 (LKGY…ALLF), 69 to 89 (VVYG…AAVF), 131 to 151 (GAAG…GLGF), 159 to 179 (LCLI…PILV), 194 to 214 (MVGR…MAIM), 220 to 240 (IKET…AQYL), 244 to 264 (FIGP…CLTL), 366 to 386 (FDWF…SIVW), 405 to 425 (LALP…SNYS), 438 to 458 (TGHA…FLTG), 494 to 514 (VTGK…VGLV), and 530 to 550 (IFTC…TWMI).

Belongs to the lactate permease family.

The protein localises to the cell inner membrane. The catalysed reaction is (S)-lactate(in) + H(+)(in) = (S)-lactate(out) + H(+)(out). The enzyme catalyses (R)-lactate(in) + H(+)(in) = (R)-lactate(out) + H(+)(out). It catalyses the reaction glycolate(in) + H(+)(in) = glycolate(out) + H(+)(out). Its activity is regulated as follows. Inhibited by the proton ionophore carbonyl cyanide m-chlorophenylhydrazone (CCCP). Functionally, uptake of L-lactate across the membrane. Can also transport D-lactate and glycolate. Seems to be driven by a proton motive force. The polypeptide is L-lactate permease (Escherichia coli (strain K12)).